The following is a 72-amino-acid chain: Translation initiation factor IF-1 (72 aa).

Positions 1-72 (MSKQTAIEQD…TKGRISFRYK (72 aa)) constitute an S1-like domain.

It belongs to the IF-1 family. Component of the 30S ribosomal translation pre-initiation complex which assembles on the 30S ribosome in the order IF-2 and IF-3, IF-1 and N-formylmethionyl-tRNA(fMet); mRNA recruitment can occur at any time during PIC assembly.

It localises to the cytoplasm. In terms of biological role, one of the essential components for the initiation of protein synthesis. Stabilizes the binding of IF-2 and IF-3 on the 30S subunit to which N-formylmethionyl-tRNA(fMet) subsequently binds. Helps modulate mRNA selection, yielding the 30S pre-initiation complex (PIC). Upon addition of the 50S ribosomal subunit IF-1, IF-2 and IF-3 are released leaving the mature 70S translation initiation complex. The protein is Translation initiation factor IF-1 of Porphyromonas gingivalis (strain ATCC BAA-308 / W83).